We begin with the raw amino-acid sequence, 199 residues long: MAEPTLASGWYPRLVVGLGNPGKNYGRTRHNVGFMVANLLAVRLGSKFEVHKRSGADVVNGRLAGCSMLVAKPRNYMNESGQQVGLLAKLYSVTPADIIIVHDDLDLDFGRIRLKLGGGEGGHNGLRSVAAALGTKDFQRVRIGIGRPTGRKDPASFVLENFTTAERMQVPTICKRAADATELLVGLGLEPAQNHVHAW.

Y25 contributes to the tRNA binding site. Residue H30 is the Proton acceptor of the active site. 3 residues coordinate tRNA: Y76, N78, and N124.

The protein belongs to the PTH family. Monomer.

The protein localises to the cytoplasm. It catalyses the reaction an N-acyl-L-alpha-aminoacyl-tRNA + H2O = an N-acyl-L-amino acid + a tRNA + H(+). Its function is as follows. Hydrolyzes ribosome-free peptidyl-tRNAs (with 1 or more amino acids incorporated), which drop off the ribosome during protein synthesis, or as a result of ribosome stalling. In terms of biological role, catalyzes the release of premature peptidyl moieties from peptidyl-tRNA molecules trapped in stalled 50S ribosomal subunits, and thus maintains levels of free tRNAs and 50S ribosomes. The sequence is that of Peptidyl-tRNA hydrolase from Mycobacterium leprae (strain Br4923).